Here is a 388-residue protein sequence, read N- to C-terminus: Dual-specificity RNA methyltransferase RlmN (388 aa).

Glutamate 109 acts as the Proton acceptor in catalysis. A Radical SAM core domain is found at 115-354; it reads EEDRATLCVS…TIVRKTRGDD (240 aa). A disulfide bridge links cysteine 122 with cysteine 359. The [4Fe-4S] cluster site is built by cysteine 129, cysteine 133, and cysteine 136. Residues 183 to 184, serine 215, 237 to 239, and asparagine 316 each bind S-adenosyl-L-methionine; these read GE and SLH. Catalysis depends on cysteine 359, which acts as the S-methylcysteine intermediate.

It belongs to the radical SAM superfamily. RlmN family. Requires [4Fe-4S] cluster as cofactor.

The protein localises to the cytoplasm. The catalysed reaction is adenosine(2503) in 23S rRNA + 2 reduced [2Fe-2S]-[ferredoxin] + 2 S-adenosyl-L-methionine = 2-methyladenosine(2503) in 23S rRNA + 5'-deoxyadenosine + L-methionine + 2 oxidized [2Fe-2S]-[ferredoxin] + S-adenosyl-L-homocysteine. The enzyme catalyses adenosine(37) in tRNA + 2 reduced [2Fe-2S]-[ferredoxin] + 2 S-adenosyl-L-methionine = 2-methyladenosine(37) in tRNA + 5'-deoxyadenosine + L-methionine + 2 oxidized [2Fe-2S]-[ferredoxin] + S-adenosyl-L-homocysteine. Its function is as follows. Specifically methylates position 2 of adenine 2503 in 23S rRNA and position 2 of adenine 37 in tRNAs. m2A2503 modification seems to play a crucial role in the proofreading step occurring at the peptidyl transferase center and thus would serve to optimize ribosomal fidelity. This Klebsiella pneumoniae subsp. pneumoniae (strain ATCC 700721 / MGH 78578) protein is Dual-specificity RNA methyltransferase RlmN.